A 609-amino-acid chain; its full sequence is N-acetyltransferase ESCO2 (609 aa).

Disordered stretches follow at residues 1–71 (MLSR…RVSP), 100–165 (EAKS…TDQV), 197–241 (KKPT…SPVR), and 314–357 (PDHD…LTAT). Composition is skewed to polar residues over residues 13–22 (AESNPSKKQI) and 41–54 (ISLN…STPK). The segment covering 126 to 135 (PAKKVQKKPR) has biased composition (basic residues). Over residues 214-230 (PTYEKPSIRKPVREKEL) the composition is skewed to basic and acidic residues. Residues 345–355 (PLNSSTPSALT) show a composition bias toward polar residues. A CCHH-type zinc finger spans residues 392-416 (TTCASCGMLYSTDSPEDNFQHTQFH).

This sequence belongs to the acetyltransferase family. ECO subfamily.

The protein localises to the nucleus. Its subcellular location is the chromosome. It carries out the reaction L-lysyl-[protein] + acetyl-CoA = N(6)-acetyl-L-lysyl-[protein] + CoA + H(+). Functionally, acetyltransferase required for the establishment of sister chromatid cohesion. Couples the processes of cohesion and DNA replication to ensure that only sister chromatids become paired together. Essential for early development. The protein is N-acetyltransferase ESCO2 (esco2) of Danio rerio (Zebrafish).